Consider the following 737-residue polypeptide: NAD(P)H-quinone oxidoreductase subunit 5, chloroplastic (737 aa).

A run of 16 helical transmembrane segments spans residues 9–29, 40–60, 89–109, 125–145, 147–167, 185–205, 219–239, 258–278, 286–306, 327–347, 354–374, 396–416, 425–445, 543–563, 602–622, and 717–737; these read WIIPFIPLPVPMLIGAGLILF, WAFQSVLLLSIVMIFSIYLSI, IDPLTSIMSILITTVGIMVLI, FAYMSFFSTSMLGLVTSSNLI, IYIFWELVGLCSYLLIGFWFT, GDFGLLLGILGFYWITGSFEF, NELNFLFVTLCAVLLFAGAVA, TPISALIHAATMVAAGIFLVA, VIPYIMYLISVIGIITVLLGA, LGYMMLALGMGSYRSALFHLI, ALLFLGSGSIIHSMETIVGYS, ITFLLGTLSLCGIPPLACFWS, WLYSPIFAIIAWATAGLTAFY, LFPIFVLGLFTLFVGAIGIPF, VVSVSIAYFGIFIASFLYKPI, and SYLFLYLAYVSVFLLVYYLLF.

It belongs to the complex I subunit 5 family. In terms of assembly, NDH is composed of at least 16 different subunits, 5 of which are encoded in the nucleus.

The protein localises to the plastid. It is found in the chloroplast thylakoid membrane. It carries out the reaction a plastoquinone + NADH + (n+1) H(+)(in) = a plastoquinol + NAD(+) + n H(+)(out). The enzyme catalyses a plastoquinone + NADPH + (n+1) H(+)(in) = a plastoquinol + NADP(+) + n H(+)(out). In terms of biological role, NDH shuttles electrons from NAD(P)H:plastoquinone, via FMN and iron-sulfur (Fe-S) centers, to quinones in the photosynthetic chain and possibly in a chloroplast respiratory chain. The immediate electron acceptor for the enzyme in this species is believed to be plastoquinone. Couples the redox reaction to proton translocation, and thus conserves the redox energy in a proton gradient. The polypeptide is NAD(P)H-quinone oxidoreductase subunit 5, chloroplastic (ndhF) (Solanum lycopersicum (Tomato)).